A 490-amino-acid polypeptide reads, in one-letter code: tRNA-guanine(15) transglycosylase (490 aa).

The active-site Nucleophile is the aspartate 92. Residues aspartate 127 and alanine 195 each contribute to the substrate site. The Zn(2+) site is built by cysteine 278, cysteine 280, and cysteine 283.

This sequence belongs to the archaeosine tRNA-ribosyltransferase family. The cofactor is Zn(2+).

The catalysed reaction is guanosine(15) in tRNA + 7-cyano-7-deazaguanine = 7-cyano-7-carbaguanosine(15) in tRNA + guanine. Its pathway is tRNA modification; archaeosine-tRNA biosynthesis. Functionally, exchanges the guanine residue with 7-cyano-7-deazaguanine (preQ0) at position 15 in the dihydrouridine loop (D-loop) of archaeal tRNAs. The polypeptide is tRNA-guanine(15) transglycosylase (Haloarcula marismortui (strain ATCC 43049 / DSM 3752 / JCM 8966 / VKM B-1809) (Halobacterium marismortui)).